The sequence spans 461 residues: Transcription factor phm6 (461 aa).

Positions 18-50 (CNRCRNHKLKCVVTEAPNGTACCQRCIRAMVPC) form a DNA-binding region, zn(2)-C6 fungal-type. Disordered stretches follow at residues 55–79 (RERKKRGSSPRVVPQSPWMHSPWET) and 256–278 (LQTDDSSSTQSESSRSRASVGAT). A compositionally biased stretch (low complexity) spans 256-274 (LQTDDSSSTQSESSRSRAS).

It is found in the nucleus. In terms of biological role, transcription factor that regulates the expression of the gene cluster that mediates the biosynthesis of the trans-fused decalin-containing tetramic acid phomasetin. This is Transcription factor phm6 from Pyrenochaetopsis sp.